Reading from the N-terminus, the 546-residue chain is Chaperonin GroEL 6 (546 aa).

Residues 30-33, K51, 87-91, G415, and D496 contribute to the ATP site; these read TLGP and DGTTT.

This sequence belongs to the chaperonin (HSP60) family. In terms of assembly, forms a cylinder of 14 subunits composed of two heptameric rings stacked back-to-back. Interacts with the co-chaperonin GroES.

It localises to the cytoplasm. It catalyses the reaction ATP + H2O + a folded polypeptide = ADP + phosphate + an unfolded polypeptide.. In terms of biological role, together with its co-chaperonin GroES, plays an essential role in assisting protein folding. The GroEL-GroES system forms a nano-cage that allows encapsulation of the non-native substrate proteins and provides a physical environment optimized to promote and accelerate protein folding. The chain is Chaperonin GroEL 6 from Bradyrhizobium diazoefficiens (strain JCM 10833 / BCRC 13528 / IAM 13628 / NBRC 14792 / USDA 110).